A 124-amino-acid polypeptide reads, in one-letter code: MLVRDIAAEVYFAQSVCFSFSAFSLFRSFLATAPALYIKSLPNNKVAETSANVDHFATVSLCTSNEKLALVAPHELLEPLPNIIAHLFESFSAALLLKVCVLSKCSCSCSPSMRKHLRVSPFLF.

This is an uncharacterized protein from Saccharomyces cerevisiae (strain ATCC 204508 / S288c) (Baker's yeast).